The primary structure comprises 602 residues: Aspartate--tRNA(Asp/Asn) ligase (602 aa).

Residue Glu-177 coordinates L-aspartate. Residues 201–204 are aspartate; that stretch reads QLFK. Arg-223 serves as a coordination point for L-aspartate. ATP-binding positions include 223-225 and Gln-232; that span reads RDE. His-460 is an L-aspartate binding site. Glu-497 contributes to the ATP binding site. An L-aspartate-binding site is contributed by Arg-504. 549-552 lines the ATP pocket; that stretch reads GLDR.

This sequence belongs to the class-II aminoacyl-tRNA synthetase family. Type 1 subfamily. Homodimer.

The protein localises to the cytoplasm. The enzyme catalyses tRNA(Asx) + L-aspartate + ATP = L-aspartyl-tRNA(Asx) + AMP + diphosphate. Aspartyl-tRNA synthetase with relaxed tRNA specificity since it is able to aspartylate not only its cognate tRNA(Asp) but also tRNA(Asn). Reaction proceeds in two steps: L-aspartate is first activated by ATP to form Asp-AMP and then transferred to the acceptor end of tRNA(Asp/Asn). This is Aspartate--tRNA(Asp/Asn) ligase from Prochlorococcus marinus (strain MIT 9515).